The primary structure comprises 768 residues: Glucoamylase S2 (768 aa).

Residues 1–21 (MQRPFLLAYLVLSLLFNSALG) form the signal peptide. Disordered stretches follow at residues 29-83 (RGSS…ETTI) and 125-149 (TTTV…PTTP). Positions 30–48 (GSSSSNITSSGPSSTPFSS) are enriched in low complexity. Asparagine 35 carries N-linked (GlcNAc...) asparagine glycosylation. Over residues 49 to 66 (ATESFSTGTTVTPSSSKY) the composition is skewed to polar residues. 2 stretches are compositionally biased toward low complexity: residues 71-83 (TETS…ETTI) and 131-149 (STSP…PTTP). 5 N-linked (GlcNAc...) asparagine glycosylation sites follow: asparagine 309, asparagine 323, asparagine 415, asparagine 424, and asparagine 435. Residues 349 to 692 (VSIERIFENI…ASTTLYQLIY (344 aa)) are h subunit. Residue tryptophan 456 coordinates substrate. N-linked (GlcNAc...) asparagine glycosylation occurs at asparagine 514. Aspartate 519 serves as the catalytic Proton acceptor. Residue glutamate 522 is the Proton donor of the active site. N-linked (GlcNAc...) asparagine glycosylation is found at asparagine 547, asparagine 646, asparagine 651, asparagine 721, and asparagine 742. A y subunit region spans residues 693 to 768 (RHISEQHDLV…LKATWEQTGN (76 aa)).

The protein belongs to the glycosyl hydrolase 15 family.

The enzyme catalyses Hydrolysis of terminal (1-&gt;4)-linked alpha-D-glucose residues successively from non-reducing ends of the chains with release of beta-D-glucose.. In Saccharomyces cerevisiae (Baker's yeast), this protein is Glucoamylase S2 (STA2).